We begin with the raw amino-acid sequence, 172 residues long: Large ribosomal subunit protein uL10 (172 aa).

The protein belongs to the universal ribosomal protein uL10 family. Part of the ribosomal stalk of the 50S ribosomal subunit. The N-terminus interacts with L11 and the large rRNA to form the base of the stalk. The C-terminus forms an elongated spine to which L12 dimers bind in a sequential fashion forming a multimeric L10(L12)X complex.

In terms of biological role, forms part of the ribosomal stalk, playing a central role in the interaction of the ribosome with GTP-bound translation factors. This Dinoroseobacter shibae (strain DSM 16493 / NCIMB 14021 / DFL 12) protein is Large ribosomal subunit protein uL10.